We begin with the raw amino-acid sequence, 238 residues long: Uridylate kinase (238 aa).

12-15 (KLSG) lines the ATP pocket. UMP is bound at residue Gly54. 2 residues coordinate ATP: Gly55 and Arg59. UMP-binding positions include Asp74 and 135–142 (TGNPFFTT). Positions 162, 168, and 171 each coordinate ATP.

Belongs to the UMP kinase family. As to quaternary structure, homohexamer.

It localises to the cytoplasm. The enzyme catalyses UMP + ATP = UDP + ADP. The protein operates within pyrimidine metabolism; CTP biosynthesis via de novo pathway; UDP from UMP (UMPK route): step 1/1. With respect to regulation, inhibited by UTP. In terms of biological role, catalyzes the reversible phosphorylation of UMP to UDP. This Bordetella avium (strain 197N) protein is Uridylate kinase.